Reading from the N-terminus, the 207-residue chain is Dephospho-CoA kinase (207 aa).

The region spanning 8 to 207 (AIALTGSIGS…LPCVDCVQSS (200 aa)) is the DPCK domain. 16 to 21 (GSGKST) lines the ATP pocket.

The protein belongs to the CoaE family.

It is found in the cytoplasm. It carries out the reaction 3'-dephospho-CoA + ATP = ADP + CoA + H(+). It functions in the pathway cofactor biosynthesis; coenzyme A biosynthesis; CoA from (R)-pantothenate: step 5/5. Functionally, catalyzes the phosphorylation of the 3'-hydroxyl group of dephosphocoenzyme A to form coenzyme A. In Helicobacter hepaticus (strain ATCC 51449 / 3B1), this protein is Dephospho-CoA kinase.